A 232-amino-acid polypeptide reads, in one-letter code: LOB domain-containing protein 11 (232 aa).

A disordered region spans residues 1 to 50 (MLKMEINGGVATPTASAVAKVTETTTPVNSPSPTSSPPPPPSPQQPPQPP). Positions 34-50 (TSSPPPPPSPQQPPQPP) are enriched in pro residues. The LOB domain maps to 54 to 155 (SPCAACKILR…AQLAKTQVEL (102 aa)). The disordered stretch occupies residues 181–218 (EQGQQKMSFESSFESGDEFISSPDEESNDLGFLEDNNN). The span at 188-202 (SFESSFESGDEFISS) shows a compositional bias: low complexity.

It belongs to the LOB domain-containing protein family. In terms of tissue distribution, expressed in young shoots, stems, leaves and flowers.

The chain is LOB domain-containing protein 11 (LBD11) from Arabidopsis thaliana (Mouse-ear cress).